Reading from the N-terminus, the 227-residue chain is uncharacterized protein (227 aa).

A run of 4 helical transmembrane segments spans residues Val17–Ser37, Gly79–Ile99, Leu112–Ile132, and Val181–Phe201.

The protein localises to the cell membrane. This is an uncharacterized protein from Escherichia coli (strain K12).